The chain runs to 121 residues: Thioredoxin-like protein (121 aa).

A Thioredoxin domain is found at 2–112 (VHHITSNDEL…LGAAAEKLGG (111 aa)). An intrachain disulfide couples C30 to C33.

Belongs to the thioredoxin family.

Functionally, participates in various redox reactions through the reversible oxidation of its active center dithiol to a disulfide and catalyzes dithiol-disulfide exchange reactions. The protein is Thioredoxin-like protein of Fusarium culmorum.